A 510-amino-acid polypeptide reads, in one-letter code: MAFNFGAPSGTSGTSTATAAPAGGFGGFGTTTTTAGSAFSFSAPTNTGSTGLLGGTQNKGFGFGTGFGTTTGTGTGLGTGLGTGLGFGGFNTQQQQQQQQTSLGGLFSQPTQAPAQSTQLINTASALSAPTLLGDERDAILAKWNQLQAFWGTGKGYFNNNIPPVEFTQENPFCRFKAVGYSCMPNNKDEDGLVVLIFNKKETDIRSQQQQLVESLHKVLGGNQTLTVNVEGIKTLPDDQTEVVIYVVERSPNGTSRRVPATTLYAHFEQANIKAQLQQLGVTLSMTRTELSPAQIKQLLQNPPAGVDPIIWEQAKVDNPDSEKLIPVPMVGFKELLRRLKVQDQMTKQHQTRLDIISEDISELQKNQTTTMAKIAQYKRKLMELSHRTLQVLIKQEIQRKSGYAIQADEEQLRVQLDTIQGELNAPTQFKGRLNELMSQIRMQNHFGAVKSEEKYYIDADLLREIKQHLKQQQEGLSHLISIIKDDLEDIKLVEHGLNETIHSRGGVFS.

Repeat copies occupy residues 5–6 (FG), 25–26 (FG), 28–29 (FG), 61–62 (FG), 63–64 (FG), 67–68 (FG), 87–88 (FG), and 447–448 (FG). The tract at residues 5–448 (FGAPSGTSGT…SQIRMQNHFG (444 aa)) is 8 X 2 AA repeats of F-G.

The protein belongs to the NUP54 family. As to quaternary structure, component of the p62 complex, a complex composed of NUP62, NUP54, and the isoform p58 and isoform p45 of NUP58. Interacts with NUTF2. Post-translationally, O-glycosylated.

It is found in the nucleus. The protein localises to the nuclear pore complex. Its subcellular location is the nucleus membrane. Functionally, component of the nuclear pore complex, a complex required for the trafficking across the nuclear membrane. This Mus musculus (Mouse) protein is Nuclear pore complex protein Nup54 (Nup54).